Here is a 358-residue protein sequence, read N- to C-terminus: Peptide chain release factor 1 (358 aa).

Position 233 is an N5-methylglutamine (Q233).

This sequence belongs to the prokaryotic/mitochondrial release factor family. In terms of processing, methylated by PrmC. Methylation increases the termination efficiency of RF1.

It is found in the cytoplasm. Functionally, peptide chain release factor 1 directs the termination of translation in response to the peptide chain termination codons UAG and UAA. The polypeptide is Peptide chain release factor 1 (Macrococcus caseolyticus (strain JCSC5402) (Macrococcoides caseolyticum)).